The chain runs to 393 residues: S-adenosylmethionine synthase 2 (393 aa).

Glutamate 9 contributes to the Mg(2+) binding site. Residue histidine 15 coordinates ATP. Position 43 (glutamate 43) interacts with K(+). Positions 56 and 99 each coordinate L-methionine. ATP-binding positions include 167–169, 235–238, aspartate 246, 252–253, alanine 269, lysine 273, and lysine 277; these read DGK, SGRF, and RM. Aspartate 246 serves as a coordination point for L-methionine. Position 277 (lysine 277) interacts with L-methionine.

This sequence belongs to the AdoMet synthase family. Homotetramer. It depends on Mn(2+) as a cofactor. Mg(2+) is required as a cofactor. Requires Co(2+) as cofactor. K(+) serves as cofactor.

It localises to the cytoplasm. The catalysed reaction is L-methionine + ATP + H2O = S-adenosyl-L-methionine + phosphate + diphosphate. It functions in the pathway amino-acid biosynthesis; S-adenosyl-L-methionine biosynthesis; S-adenosyl-L-methionine from L-methionine: step 1/1. Functionally, catalyzes the formation of S-adenosylmethionine from methionine and ATP. The reaction comprises two steps that are both catalyzed by the same enzyme: formation of S-adenosylmethionine (AdoMet) and triphosphate, and subsequent hydrolysis of the triphosphate. This Daucus carota (Wild carrot) protein is S-adenosylmethionine synthase 2 (SAMS2).